The following is a 281-amino-acid chain: Ras-related protein Rab-40C (281 aa).

GTP-binding residues include Ser-23, Gly-26, Lys-27, and Ser-46. The segment at Ser-41–Ile-49 is switch-I. Ser-46 and Asp-69 together coordinate Mg(2+). The GTP site is built by Gly-72, Asn-126, and Arg-127. Residues Gly-72–Gln-88 form a switch-II region. The SOCS box domain maps to Leu-175 to Ala-228. The interval Ser-245–Ser-281 is disordered. The segment covering Pro-270–Ser-281 has biased composition (polar residues). Cys-273 is lipidated: S-palmitoyl cysteine. Cys-278 is lipidated: S-geranylgeranyl cysteine.

It belongs to the small GTPase superfamily. Rab family. In terms of assembly, component of the cullin-5-RING E3 ubiquitin-protein ligase complex (ECS(RAB40C) complex) composed of CUL5, Elongin BC (ELOB and ELOC), RNF7/RBX2 and RAB40C. Interacts with protein phosphatase 6 (PP6) complex components ANKRD28, ANKRD52, PPP6C, PP6R1 and PP6R2; the interaction leads to ANKRD28 ubiquitination and decreased PP6 activity. Interacts with DAB2IP; DAB2IP acts as a GAP for RAB40C. It depends on Mg(2+) as a cofactor.

Its subcellular location is the cell membrane. The protein resides in the cytoplasm. It is found in the cytosol. It localises to the golgi apparatus membrane. It catalyses the reaction GTP + H2O = GDP + phosphate + H(+). The protein operates within protein modification; protein ubiquitination. With respect to regulation, regulated by guanine nucleotide exchange factors (GEFs) which promote the exchange of bound GDP for free GTP. Regulated by GTPase activating proteins (GAPs) including DAB2IP, which increase the GTP hydrolysis activity. Inhibited by GDP dissociation inhibitors (GDIs). Functionally, RAB40C small GTPase acts as substrate-recognition component of the ECS(RAB40C) E3 ubiquitin ligase complex which mediates the ubiquitination and subsequent proteasomal degradation of target proteins. The Rab40 subfamily belongs to the Rab family that are key regulators of intracellular membrane trafficking, from the formation of transport vesicles to their fusion with membranes. Rabs cycle between an inactive GDP-bound form and an active GTP-bound form that is able to recruit to membranes different sets of downstream effectors directly responsible for vesicle formation, movement, tethering and fusion. As part of the ECS(RAB40C) complex, mediates ANKRD28 ubiquitination and degradation, thereby inhibiting protein phosphatase 6 (PP6) complex activity and focal adhesion assembly during cell migration. Also negatively regulate lipid droplets accumulation in a GTP-dependent manner. The protein is Ras-related protein Rab-40C of Homo sapiens (Human).